A 68-amino-acid chain; its full sequence is Large ribosomal subunit protein bL32 (68 aa).

The segment at 1 to 24 (MAVPQNRVTRSRRNMRRSHDALVA) is disordered.

The protein belongs to the bacterial ribosomal protein bL32 family.

The chain is Large ribosomal subunit protein bL32 from Paracoccus denitrificans (strain Pd 1222).